The chain runs to 141 residues: Nucleoside diphosphate kinase (141 aa).

ATP-binding residues include K11, F59, R87, T93, R104, and N114. H117 serves as the catalytic Pros-phosphohistidine intermediate.

It belongs to the NDK family. As to quaternary structure, homotetramer. It depends on Mg(2+) as a cofactor.

The protein resides in the cytoplasm. It carries out the reaction a 2'-deoxyribonucleoside 5'-diphosphate + ATP = a 2'-deoxyribonucleoside 5'-triphosphate + ADP. The enzyme catalyses a ribonucleoside 5'-diphosphate + ATP = a ribonucleoside 5'-triphosphate + ADP. Major role in the synthesis of nucleoside triphosphates other than ATP. The ATP gamma phosphate is transferred to the NDP beta phosphate via a ping-pong mechanism, using a phosphorylated active-site intermediate. This is Nucleoside diphosphate kinase from Chromobacterium violaceum (strain ATCC 12472 / DSM 30191 / JCM 1249 / CCUG 213 / NBRC 12614 / NCIMB 9131 / NCTC 9757 / MK).